A 257-amino-acid chain; its full sequence is NAD-capped RNA hydrolase NudC (257 aa).

The substrate site is built by lysine 25 and arginine 69. Residues cysteine 98 and cysteine 101 each coordinate Zn(2+). Residue glutamate 111 participates in substrate binding. Zn(2+) is bound by residues cysteine 116 and cysteine 119. Substrate is bound at residue tyrosine 124. The Nudix hydrolase domain maps to 125–248; that stretch reads PQIAPCIIVA…TVARRLIEDT (124 aa). Positions 158, 174, and 178 each coordinate a divalent metal cation. The Nudix box signature appears at 159–180; sequence GFVEVGETLEQAVAREVMEESG. A substrate-binding site is contributed by 192-199; it reads QPWPFPQS. Glutamate 219 contributes to the a divalent metal cation binding site. Alanine 241 serves as a coordination point for substrate.

This sequence belongs to the Nudix hydrolase family. NudC subfamily. Homodimer. The cofactor is Mg(2+). Requires Mn(2+) as cofactor. It depends on Zn(2+) as a cofactor.

The enzyme catalyses a 5'-end NAD(+)-phospho-ribonucleoside in mRNA + H2O = a 5'-end phospho-adenosine-phospho-ribonucleoside in mRNA + beta-nicotinamide D-ribonucleotide + 2 H(+). It catalyses the reaction NAD(+) + H2O = beta-nicotinamide D-ribonucleotide + AMP + 2 H(+). The catalysed reaction is NADH + H2O = reduced beta-nicotinamide D-ribonucleotide + AMP + 2 H(+). Its function is as follows. mRNA decapping enzyme that specifically removes the nicotinamide adenine dinucleotide (NAD) cap from a subset of mRNAs by hydrolyzing the diphosphate linkage to produce nicotinamide mononucleotide (NMN) and 5' monophosphate mRNA. The NAD-cap is present at the 5'-end of some mRNAs and stabilizes RNA against 5'-processing. Has preference for mRNAs with a 5'-end purine. Catalyzes the hydrolysis of a broad range of dinucleotide pyrophosphates. This is NAD-capped RNA hydrolase NudC from Escherichia coli O157:H7.